The chain runs to 344 residues: 3-dehydroquinate synthase (344 aa).

Residues 60-65 (DGEEYK), 94-98 (GVISD), 118-119 (TT), K131, K140, and 158-161 (FLNT) each bind NAD(+). Residues E173, H232, and H249 each coordinate Zn(2+).

Belongs to the sugar phosphate cyclases superfamily. Dehydroquinate synthase family. Co(2+) serves as cofactor. The cofactor is Zn(2+). NAD(+) is required as a cofactor.

It localises to the cytoplasm. It catalyses the reaction 7-phospho-2-dehydro-3-deoxy-D-arabino-heptonate = 3-dehydroquinate + phosphate. The protein operates within metabolic intermediate biosynthesis; chorismate biosynthesis; chorismate from D-erythrose 4-phosphate and phosphoenolpyruvate: step 2/7. Catalyzes the conversion of 3-deoxy-D-arabino-heptulosonate 7-phosphate (DAHP) to dehydroquinate (DHQ). This Campylobacter hominis (strain ATCC BAA-381 / DSM 21671 / CCUG 45161 / LMG 19568 / NCTC 13146 / CH001A) protein is 3-dehydroquinate synthase.